The sequence spans 210 residues: uncharacterized protein (210 aa).

This is an uncharacterized protein from Fowl adenovirus A serotype 1 (strain CELO / Phelps) (FAdV-1).